Here is a 358-residue protein sequence, read N- to C-terminus: Phenylalanine--tRNA ligase alpha subunit (358 aa).

Glu-262 contributes to the Mg(2+) binding site.

It belongs to the class-II aminoacyl-tRNA synthetase family. Phe-tRNA synthetase alpha subunit type 1 subfamily. Tetramer of two alpha and two beta subunits. Mg(2+) serves as cofactor.

The protein localises to the cytoplasm. The enzyme catalyses tRNA(Phe) + L-phenylalanine + ATP = L-phenylalanyl-tRNA(Phe) + AMP + diphosphate + H(+). In Streptomyces coelicolor (strain ATCC BAA-471 / A3(2) / M145), this protein is Phenylalanine--tRNA ligase alpha subunit (pheS).